Consider the following 121-residue polypeptide: Large ribosomal subunit protein bL12 (121 aa).

Belongs to the bacterial ribosomal protein bL12 family. As to quaternary structure, homodimer. Part of the ribosomal stalk of the 50S ribosomal subunit. Forms a multimeric L10(L12)X complex, where L10 forms an elongated spine to which 2 to 4 L12 dimers bind in a sequential fashion. Binds GTP-bound translation factors.

In terms of biological role, forms part of the ribosomal stalk which helps the ribosome interact with GTP-bound translation factors. Is thus essential for accurate translation. The sequence is that of Large ribosomal subunit protein bL12 from Clostridium perfringens (strain 13 / Type A).